A 328-amino-acid chain; its full sequence is Endo-beta-1,4-glucanase B (328 aa).

Residues 1–17 (MKVNTLLVAVAAGTAMA) form the signal peptide. Asn-95 carries N-linked (GlcNAc...) asparagine glycosylation. Glu-155 (proton donor) is an active-site residue. The active-site Nucleophile is Glu-262.

This sequence belongs to the glycosyl hydrolase 5 (cellulase A) family.

Its subcellular location is the secreted. The catalysed reaction is Endohydrolysis of (1-&gt;4)-beta-D-glucosidic linkages in cellulose, lichenin and cereal beta-D-glucans.. Functionally, has endoglucanase activity on substrates containing beta-1,4 glycosidic bonds, like in carboxymethylcellulose (CMC), hydroxyethylcellulose (HEC) and beta-glucan. Involved in the degradation of complex natural cellulosic substrates. This chain is Endo-beta-1,4-glucanase B (eglB), found in Emericella nidulans (strain FGSC A4 / ATCC 38163 / CBS 112.46 / NRRL 194 / M139) (Aspergillus nidulans).